A 77-amino-acid polypeptide reads, in one-letter code: UPF0349 protein lmo2392 (77 aa).

This sequence belongs to the UPF0349 family.

This chain is UPF0349 protein lmo2392, found in Listeria monocytogenes serovar 1/2a (strain ATCC BAA-679 / EGD-e).